Here is a 214-residue protein sequence, read N- to C-terminus: Eukaryotic translation initiation factor 4E-1B (214 aa).

MRNA-binding positions include 53–54, 99–100, 154–159, and 202–204; these read WQ, WE, RAKGDK, and TKS.

Ovary, muscle and testis.

The protein localises to the cytoplasm. The protein resides in the nucleus. Its function is as follows. Does not appear to be a mRNA-cap-binding protein. The protein is Eukaryotic translation initiation factor 4E-1B of Danio rerio (Zebrafish).